The sequence spans 167 residues: Lipoprotein signal peptidase (167 aa).

2 helical membrane-spanning segments follow: residues 56-76 (FAPP…VLVF) and 84-104 (TPIF…NMID). Catalysis depends on residues D113 and D139. Residues 132–152 (WPIFNVADSAITIGACMLVLF) traverse the membrane as a helical segment.

This sequence belongs to the peptidase A8 family.

The protein localises to the cell inner membrane. The enzyme catalyses Release of signal peptides from bacterial membrane prolipoproteins. Hydrolyzes -Xaa-Yaa-Zaa-|-(S,diacylglyceryl)Cys-, in which Xaa is hydrophobic (preferably Leu), and Yaa (Ala or Ser) and Zaa (Gly or Ala) have small, neutral side chains.. Its pathway is protein modification; lipoprotein biosynthesis (signal peptide cleavage). This protein specifically catalyzes the removal of signal peptides from prolipoproteins. The chain is Lipoprotein signal peptidase from Chlorobium luteolum (strain DSM 273 / BCRC 81028 / 2530) (Pelodictyon luteolum).